Here is a 247-residue protein sequence, read N- to C-terminus: 14-3-3 protein gamma-B (247 aa).

It belongs to the 14-3-3 family. Homodimer, and heterodimer with other family members.

The protein localises to the cytoplasm. Adapter protein implicated in the regulation of a large spectrum of both general and specialized signaling pathways. Binds to a large number of partners, usually by recognition of a phosphoserine or phosphothreonine motif. Binding generally results in the modulation of the activity of the binding partner. This Xenopus laevis (African clawed frog) protein is 14-3-3 protein gamma-B (ywhag-b).